Here is a 134-residue protein sequence, read N- to C-terminus: Thioredoxin-like protein Clot (134 aa).

The Thioredoxin domain maps to 1-134 (MTLKKVDANP…LILPLLAPST (134 aa)). Residues Cys-48 and Cys-51 each act as nucleophile in the active site. Cysteines 48 and 51 form a disulfide.

It belongs to the thioredoxin family.

Its function is as follows. Probable thiol-disulfide oxidoreductase that may participate in various redox reactions. This Arabidopsis thaliana (Mouse-ear cress) protein is Thioredoxin-like protein Clot.